Reading from the N-terminus, the 326-residue chain is ATP synthase gamma chain (326 aa).

It belongs to the ATPase gamma chain family. F-type ATPases have 2 components, CF(1) - the catalytic core - and CF(0) - the membrane proton channel. CF(1) has five subunits: alpha(3), beta(3), gamma(1), delta(1), epsilon(1). CF(0) has three main subunits: a, b and c.

It is found in the cell membrane. Functionally, produces ATP from ADP in the presence of a proton gradient across the membrane. The gamma chain is believed to be important in regulating ATPase activity and the flow of protons through the CF(0) complex. The polypeptide is ATP synthase gamma chain (Rhodococcus opacus (strain B4)).